Here is a 209-residue protein sequence, read N- to C-terminus: Ribosomal RNA large subunit methyltransferase E (209 aa).

Positions 63, 65, 83, 99, and 124 each coordinate S-adenosyl-L-methionine. The active-site Proton acceptor is Lys164.

It belongs to the class I-like SAM-binding methyltransferase superfamily. RNA methyltransferase RlmE family.

The protein localises to the cytoplasm. It carries out the reaction uridine(2552) in 23S rRNA + S-adenosyl-L-methionine = 2'-O-methyluridine(2552) in 23S rRNA + S-adenosyl-L-homocysteine + H(+). Its function is as follows. Specifically methylates the uridine in position 2552 of 23S rRNA at the 2'-O position of the ribose in the fully assembled 50S ribosomal subunit. The protein is Ribosomal RNA large subunit methyltransferase E of Vibrio cholerae serotype O1 (strain ATCC 39541 / Classical Ogawa 395 / O395).